We begin with the raw amino-acid sequence, 135 residues long: Large ribosomal subunit protein uL16c (135 aa).

This sequence belongs to the universal ribosomal protein uL16 family. In terms of assembly, part of the 50S ribosomal subunit.

It localises to the plastid. The protein resides in the chloroplast. The polypeptide is Large ribosomal subunit protein uL16c (Lotus japonicus (Lotus corniculatus var. japonicus)).